We begin with the raw amino-acid sequence, 220 residues long: Probable metallo-hydrolase YybB (220 aa).

His-67, His-69, Asp-71, His-72, His-139, Asp-158, and His-200 together coordinate Zn(2+).

The protein belongs to the metallo-beta-lactamase superfamily. The cofactor is Zn(2+).

The polypeptide is Probable metallo-hydrolase YybB (yybB) (Bacillus subtilis (strain 168)).